The chain runs to 70 residues: Small ribosomal subunit protein bS21 (70 aa).

This sequence belongs to the bacterial ribosomal protein bS21 family.

This is Small ribosomal subunit protein bS21 from Nautilia profundicola (strain ATCC BAA-1463 / DSM 18972 / AmH).